The sequence spans 300 residues: NAD kinase (300 aa).

The active-site Proton acceptor is the aspartate 75. NAD(+) is bound by residues 75–76 (DG), 149–150 (ND), arginine 177, aspartate 179, 190–195 (TAYALS), alanine 214, and glutamine 248.

It belongs to the NAD kinase family. It depends on a divalent metal cation as a cofactor.

It localises to the cytoplasm. The enzyme catalyses NAD(+) + ATP = ADP + NADP(+) + H(+). Its function is as follows. Involved in the regulation of the intracellular balance of NAD and NADP, and is a key enzyme in the biosynthesis of NADP. Catalyzes specifically the phosphorylation on 2'-hydroxyl of the adenosine moiety of NAD to yield NADP. The polypeptide is NAD kinase (Burkholderia orbicola (strain MC0-3)).